We begin with the raw amino-acid sequence, 64 residues long: Endodeoxyribonuclease toxin RalR (64 aa).

Ca(2+) is required as a cofactor. The cofactor is Mg(2+).

Inhibited by EDTA. Its function is as follows. Toxic component of a type I toxin-antitoxin (TA) system. Upon overexpression inhibits growth and reduces colony-forming units in both the presence and absence of the Rac prophage, cells become filamentous. Has deoxyribonuclease activity (probably endonucleolytic), does not digest RNA. Its toxic effects are neutralized by sRNA antitoxin RalA, which is encoded in trans on the opposite DNA strand. Has RAL-like activity. The protein is Endodeoxyribonuclease toxin RalR (ralR) of Escherichia coli (strain K12).